Reading from the N-terminus, the 421-residue chain is Enolase (421 aa).

(2R)-2-phosphoglycerate is bound at residue Gln165. Glu207 functions as the Proton donor in the catalytic mechanism. Residues Asp244, Glu285, and Asp312 each coordinate Mg(2+). (2R)-2-phosphoglycerate is bound by residues Lys337, Arg366, Ser367, and Lys388. Lys337 functions as the Proton acceptor in the catalytic mechanism.

Belongs to the enolase family. Requires Mg(2+) as cofactor.

Its subcellular location is the cytoplasm. It is found in the secreted. The protein localises to the cell surface. It catalyses the reaction (2R)-2-phosphoglycerate = phosphoenolpyruvate + H2O. Its pathway is carbohydrate degradation; glycolysis; pyruvate from D-glyceraldehyde 3-phosphate: step 4/5. In terms of biological role, catalyzes the reversible conversion of 2-phosphoglycerate (2-PG) into phosphoenolpyruvate (PEP). It is essential for the degradation of carbohydrates via glycolysis. In Ehrlichia canis (strain Jake), this protein is Enolase.